Reading from the N-terminus, the 890-residue chain is Inter-alpha-trypsin inhibitor heavy chain H3 (890 aa).

An N-terminal signal peptide occupies residues 1–20 (MAFAWWPCLILALLSSLAAS). Residues 21–34 (GFPRSPFRLLGKRS) constitute a propeptide that is removed on maturation. One can recognise a VIT domain in the interval 29–158 (LLGKRSLPEG…KVTFELTYEE (130 aa)). Asn-91 is a glycosylation site (N-linked (GlcNAc...) asparagine). The 184-residue stretch at 284-467 (NVAFVIDISG…LQLQGFYEEV (184 aa)) folds into the VWFA domain. An N-linked (GlcNAc...) asparagine glycan is attached at Asn-580. Position 651 is an aspartate 1-(chondroitin 4-sulfate)-ester (Asp-651). Positions 652–890 (PHFIIQIPEK…HTDYIVPNLF (239 aa)) are excised as a propeptide.

Belongs to the ITIH family. I-alpha-I plasma protease inhibitors are assembled from one or two heavy chains (HC) and one light chain, bikunin. Pre-alpha-inhibitor (P-alpha-I) is composed of ITIH3/HC3 and bikunin. Heavy chains are linked to bikunin via chondroitin 4-sulfate esterified to the alpha-carboxyl of the C-terminal aspartate after propeptide cleavage.

It localises to the secreted. Its function is as follows. May act as a carrier of hyaluronan in serum or as a binding protein between hyaluronan and other matrix protein, including those on cell surfaces in tissues to regulate the localization, synthesis and degradation of hyaluronan which are essential to cells undergoing biological processes. The chain is Inter-alpha-trypsin inhibitor heavy chain H3 (ITIH3) from Homo sapiens (Human).